We begin with the raw amino-acid sequence, 613 residues long: Ethylene response sensor 1 (613 aa).

3 helical membrane passes run 23 to 43 (ISDA…IYFV), 58 to 78 (FGAF…MFFM), and 95 to 115 (AVVS…LLSV). Cysteine 65 and histidine 69 together coordinate Cu cation. Residues 158–307 (DRHTILRTTL…NVADQVAVAL (150 aa)) form the GAF domain. The 240-residue stretch at 350 to 589 (VMNHEMRTPM…SFIIRLGICN (240 aa)) folds into the Histidine kinase domain. Phosphohistidine; by autocatalysis is present on histidine 353.

Belongs to the ethylene receptor family. As to quaternary structure, homodimer; disulfide-linked. Heteromer with ETR1. Requires Cu cation as cofactor. Autophosphorylated on both His and Ser residues in the presence of manganese. Loss of His autophosphorylation in the presence of both manganese and magnesium. Expressed in etiolated seedlings, leaves, stems, roots, flowers, embryos, anthers, carpels and ovules.

It is found in the endoplasmic reticulum membrane. It carries out the reaction ATP + protein L-histidine = ADP + protein N-phospho-L-histidine.. In terms of biological role, ethylene receptor related to bacterial two-component regulators. Acts as a redundant negative regulator of ethylene signaling. The sequence is that of Ethylene response sensor 1 (ERS1) from Arabidopsis thaliana (Mouse-ear cress).